The following is a 365-amino-acid chain: Chorismate synthase (365 aa).

Residues Arg48 and Arg54 each contribute to the NADP(+) site. Residues 131–133, 243–244, Gly288, 303–307, and Arg329 contribute to the FMN site; these read RSS, NA, and KPTSS.

The protein belongs to the chorismate synthase family. In terms of assembly, homotetramer. It depends on FMNH2 as a cofactor.

The enzyme catalyses 5-O-(1-carboxyvinyl)-3-phosphoshikimate = chorismate + phosphate. It functions in the pathway metabolic intermediate biosynthesis; chorismate biosynthesis; chorismate from D-erythrose 4-phosphate and phosphoenolpyruvate: step 7/7. Its function is as follows. Catalyzes the anti-1,4-elimination of the C-3 phosphate and the C-6 proR hydrogen from 5-enolpyruvylshikimate-3-phosphate (EPSP) to yield chorismate, which is the branch point compound that serves as the starting substrate for the three terminal pathways of aromatic amino acid biosynthesis. This reaction introduces a second double bond into the aromatic ring system. This chain is Chorismate synthase, found in Sinorhizobium fredii (strain NBRC 101917 / NGR234).